Here is a 31-residue protein sequence, read N- to C-terminus: Cyclotide hyen-I (31 aa).

The cyclopeptide (Gly-Asp) cross-link spans 1–31 (GSTPCGESCVWIPCISGIVGCSCSNKVCYMD). Intrachain disulfides connect C5-C21, C9-C23, and C14-C28.

This is a cyclic peptide. In terms of tissue distribution, detected in seeds (at protein level).

Functionally, probably participates in a plant defense mechanism. The chain is Cyclotide hyen-I from Pigea enneasperma (Spade flower).